We begin with the raw amino-acid sequence, 450 residues long: Probable ECA polymerase (450 aa).

11 consecutive transmembrane segments (helical) span residues 6–26 (FSGL…LTWF), 37–57 (VFFS…TSVL), 63–83 (VGVA…CFYA), 118–138 (VILM…NGFL), 155–175 (GVAL…VYFL), 181–201 (AWLF…MIVG), 207–227 (IIIA…ISLW), 228–248 (MLAA…LKRY), 341–361 (LVVM…GLII), 378–398 (YKAA…IVLA), and 410–430 (VFFI…YWLF).

This sequence belongs to the WzyE family. Probably part of a complex composed of WzxE, WzyE and WzzE.

The protein localises to the cell inner membrane. The protein operates within bacterial outer membrane biogenesis; enterobacterial common antigen biosynthesis. In terms of biological role, probably involved in the polymerization of enterobacterial common antigen (ECA) trisaccharide repeat units. The polypeptide is Probable ECA polymerase (Shigella boydii serotype 18 (strain CDC 3083-94 / BS512)).